The chain runs to 368 residues: Histidinol-phosphate aminotransferase (368 aa).

N6-(pyridoxal phosphate)lysine is present on K215.

Belongs to the class-II pyridoxal-phosphate-dependent aminotransferase family. Histidinol-phosphate aminotransferase subfamily. Homodimer. Pyridoxal 5'-phosphate serves as cofactor.

The catalysed reaction is L-histidinol phosphate + 2-oxoglutarate = 3-(imidazol-4-yl)-2-oxopropyl phosphate + L-glutamate. It functions in the pathway amino-acid biosynthesis; L-histidine biosynthesis; L-histidine from 5-phospho-alpha-D-ribose 1-diphosphate: step 7/9. This is Histidinol-phosphate aminotransferase from Buchnera aphidicola subsp. Acyrthosiphon pisum (strain 5A).